The following is a 129-amino-acid chain: M-zodatoxin-Lt8f (129 aa).

The N-terminal stretch at 1 to 20 (MKYFVVALALVAAFACIAES) is a signal peptide. Positions 21-60 (KPAESEHELAEVEEENELADLEDAVWLEHLADLSDLEEAR) are excised as a propeptide. Residues 57 to 60 (EEAR) carry the Processing quadruplet motif motif.

Cleavage of the propeptide depends on the processing quadruplet motif (XXXR, with at least one of X being E). In terms of tissue distribution, expressed by the venom gland.

The protein localises to the secreted. Its function is as follows. Insecticidal, cytolytic and antimicrobial peptide. Has insecticidal activity against the flesh fly S.carnaria. Has antibacterial activity against the Gram-negative bacteria E.coli. Forms voltage-dependent, ion-permeable channels in membranes. At high concentration causes cell membrane lysis. The sequence is that of M-zodatoxin-Lt8f (cit 1-7) from Lachesana tarabaevi (Spider).